The following is an 84-amino-acid chain: Putative defensin-like protein 114 (84 aa).

The N-terminal stretch at M1–C24 is a signal peptide. 4 cysteine pairs are disulfide-bonded: C41/C81, C47/C69, C54/C79, and C58/C80.

This sequence belongs to the DEFL family.

It localises to the secreted. This is Putative defensin-like protein 114 from Arabidopsis thaliana (Mouse-ear cress).